Consider the following 151-residue polypeptide: Ubiquitin-conjugating enzyme E2-17 kDa (151 aa).

The 147-residue stretch at 4-150 (PARRRLMRDF…VKACVEQSFI (147 aa)) folds into the UBC core domain. Residue C88 is the Glycyl thioester intermediate of the active site.

The protein belongs to the ubiquitin-conjugating enzyme family.

The protein localises to the nucleus. It catalyses the reaction S-ubiquitinyl-[E1 ubiquitin-activating enzyme]-L-cysteine + [E2 ubiquitin-conjugating enzyme]-L-cysteine = [E1 ubiquitin-activating enzyme]-L-cysteine + S-ubiquitinyl-[E2 ubiquitin-conjugating enzyme]-L-cysteine.. It functions in the pathway protein modification; protein ubiquitination. Functionally, E2 ubiquitin-conjugating enzyme that accepts ubiquitin from the ubiquitin-activating enzyme E1 and transfers it to a E3 ubiquitin-protein ligase. Required for postreplication repair of UV-damaged DNA. Involved in the negative regulation of the Ras/MAPK signaling pathway in the wing by acting with the putative E3 ligases poe, Kcmf1 and Ufd4 to mediate the ubiquitination and proteasomal degradation of rl/MAPK. Required for in mitophagy. This chain is Ubiquitin-conjugating enzyme E2-17 kDa, found in Drosophila melanogaster (Fruit fly).